Reading from the N-terminus, the 428-residue chain is Chaperone SurA (428 aa).

The N-terminal stretch at 1 to 20 is a signal peptide; that stretch reads MKNWKTLLLGIAMIANTSFA. PpiC domains follow at residues 171–272 and 282–382; these read STEL…KVND and VTEV…ELLD.

The protein localises to the periplasm. It carries out the reaction [protein]-peptidylproline (omega=180) = [protein]-peptidylproline (omega=0). Functionally, chaperone involved in the correct folding and assembly of outer membrane proteins. Recognizes specific patterns of aromatic residues and the orientation of their side chains, which are found more frequently in integral outer membrane proteins. May act in both early periplasmic and late outer membrane-associated steps of protein maturation. In Salmonella paratyphi A (strain ATCC 9150 / SARB42), this protein is Chaperone SurA.